The primary structure comprises 94 residues: CRISPR-associated endoribonuclease Cas2 1 (94 aa).

Aspartate 8 provides a ligand contact to Mg(2+).

Belongs to the CRISPR-associated endoribonuclease Cas2 protein family. In terms of assembly, homodimer, forms a heterotetramer with a Cas1 homodimer. Requires Mg(2+) as cofactor.

Its function is as follows. CRISPR (clustered regularly interspaced short palindromic repeat), is an adaptive immune system that provides protection against mobile genetic elements (viruses, transposable elements and conjugative plasmids). CRISPR clusters contain sequences complementary to antecedent mobile elements and target invading nucleic acids. CRISPR clusters are transcribed and processed into CRISPR RNA (crRNA). Involved in the integration of spacer DNA into the CRISPR cassette. Functions as a ssRNA-specific endoribonuclease. The protein is CRISPR-associated endoribonuclease Cas2 1 (cas21) of Archaeoglobus fulgidus (strain ATCC 49558 / DSM 4304 / JCM 9628 / NBRC 100126 / VC-16).